Reading from the N-terminus, the 130-residue chain is MRLPYVFAATMATLLVSSNALVNSNQAMLSSPNEQHQRQLRSHQTPVEDQEPDEERSLSKAEMKRLFEAGNSLDDFAKHLGIADDVVRAQSSNTVLQRLMQTDEYMKYSTYLNFLSKQNKKKKPPTFYHL.

Positions 1–20 (MRLPYVFAATMATLLVSSNA) are cleaved as a signal peptide. Residues 27 to 58 (AMLSSPNEQHQRQLRSHQTPVEDQEPDEERSL) form a disordered region. The RxLR-dEER motif lies at 38 to 56 (RQLRSHQTPVEDQEPDEER).

The protein belongs to the RxLR effector family.

The protein localises to the secreted. It is found in the host nucleus. The protein resides in the host cytoplasm. Its function is as follows. Effector that enhances P.infestans colonization of Nicotiana benthamiana leaves. This is RxLR effector protein PITG_14783 from Phytophthora infestans (strain T30-4) (Potato late blight agent).